The chain runs to 434 residues: UDP-N-acetylmuramoylalanine--D-glutamate ligase (434 aa).

117-123 is a binding site for ATP; sequence GTNGKST.

It belongs to the MurCDEF family.

The protein localises to the cytoplasm. It carries out the reaction UDP-N-acetyl-alpha-D-muramoyl-L-alanine + D-glutamate + ATP = UDP-N-acetyl-alpha-D-muramoyl-L-alanyl-D-glutamate + ADP + phosphate + H(+). The protein operates within cell wall biogenesis; peptidoglycan biosynthesis. Functionally, cell wall formation. Catalyzes the addition of glutamate to the nucleotide precursor UDP-N-acetylmuramoyl-L-alanine (UMA). The protein is UDP-N-acetylmuramoylalanine--D-glutamate ligase of Sphingopyxis alaskensis (strain DSM 13593 / LMG 18877 / RB2256) (Sphingomonas alaskensis).